A 39-amino-acid polypeptide reads, in one-letter code: MKISRILLAAVILSSVFSITYLQSDHNTEIKVAADRVGA.

The propeptide occupies 1 to 34 (MKISRILLAAVILSSVFSITYLQSDHNTEIKVAA).

Belongs to the Phr family. Post-translationally, contains a predicted signal peptide cleavage site in the N-terminal region, however the propeptide is probably subject to only one processing event, at the N-terminal end of the mature peptide.

It is found in the secreted. Its subcellular location is the cytoplasm. In terms of biological role, intercellular signaling molecule that inhibits excision of the mobile genetic element ICEBs1 when cells are crowded by cells that contain ICEBs1 and produce the PhrI peptide. Secreted during production, but the mature peptide acts intracellularly, indicating that it needs to be imported into the cell to function. Acts by inhibiting RapI activity. In Bacillus subtilis (strain 168), this protein is Phosphatase RapI inhibitor (phrI).